The following is a 68-amino-acid chain: Alpha-conotoxin-like Lt1.2 (68 aa).

The N-terminal stretch at 1–21 is a signal peptide; the sequence is MGMRMMFIMFMLVVLATTVDT. The propeptide occupies 22 to 48; that stretch reads FTSDRALDAMNAAASNKASRLIALAVR. Cystine bridges form between Cys50-Cys56 and Cys51-Cys64. The tract at residues 52–54 is lacks the Ser-Xaa-Pro motif that is crucial for potent interaction with nAChR; sequence ARA. Glycine amide is present on Gly65.

Belongs to the conotoxin A superfamily. As to expression, expressed by the venom duct.

It localises to the secreted. Its function is as follows. Alpha-conotoxins act on postsynaptic membranes, they bind to the nicotinic acetylcholine receptors (nAChR) and thus inhibit them. Has a distinct nAChR binding mode from other alpha-conotoxins, due to a different three residue motif (Ala-Xaa-Ala instead of the conserved Ser-Xaa-Pro motif). This Conus litteratus (Lettered cone) protein is Alpha-conotoxin-like Lt1.2.